We begin with the raw amino-acid sequence, 88 residues long: Small ribosomal subunit protein bS16 (88 aa).

It belongs to the bacterial ribosomal protein bS16 family.

The protein is Small ribosomal subunit protein bS16 of Geobacter sp. (strain M21).